The primary structure comprises 863 residues: Receptor-like protein 9DC1 (863 aa).

Residues 1–21 (MGCVKLVFFMLYVFLFQLVSS) form the signal peptide. Residues 22-812 (SSLPHLCPED…EEDSPMISWQ (791 aa)) lie on the Extracellular side of the membrane. The segment at 24–90 (LPHLCPEDQA…GVHCDETTGQ (67 aa)) is N-cap. N-linked (GlcNAc...) asparagine glycans are attached at residues asparagine 71 and asparagine 108. Residues 91 to 114 (VIALDLRCSQLQGKFHSNSSLFQL) form an LRR 1; degenerate repeat. LRR repeat units follow at residues 115–138 (SNLK…KFGE) and 140–163 (SDLT…ISHL). Residues 164–190 (SKLHVLLIGDQYGLSIVPHNFEPLLKN) form an LRR 4; degenerate repeat. Asparagine 190, asparagine 203, and asparagine 211 each carry an N-linked (GlcNAc...) asparagine glycan. LRR repeat units follow at residues 191-213 (LTQL…SNFS), 214-237 (SHLT…VFHL), 240-262 (LEFL…KWNS), 264-286 (ASLM…SFSH), 287-311 (LTSL…LWNL), and 312-336 (TNIE…IFEK). An N-linked (GlcNAc...) asparagine glycan is attached at asparagine 261. 2 N-linked (GlcNAc...) asparagine glycosylation sites follow: asparagine 299 and asparagine 310. Residues 337 to 357 (LKKLSLFRNDNLDGGLEFLSF) form an LRR 11; degenerate repeat. LRR repeat units lie at residues 358–382 (NTQL…ISGL), 383–406 (QNLE…IFSL), 408–428 (SLVE…EFKS), 429–452 (KTLS…LLNQ), 454–476 (NLQL…ICNL), 477–500 (KTLI…VVER), 502–524 (EYLS…TFSV), 525–549 (GNIL…MINC), 551–572 (YLTL…WLGY), 573–597 (LFQL…GNTN), 599–623 (FMGL…ILGN), 667–690 (LDSN…IIGD), 691–714 (LVGL…SFQN), 715–739 (LSVL…LASL), and 741–759 (FLEV…IPKG). N-linked (GlcNAc...) asparagine glycans are attached at residues asparagine 378, asparagine 396, and asparagine 416. Asparagine 464 is a glycosylation site (N-linked (GlcNAc...) asparagine). An N-linked (GlcNAc...) asparagine glycan is attached at asparagine 519. Asparagine 563 carries N-linked (GlcNAc...) asparagine glycosylation. N-linked (GlcNAc...) asparagine glycans are attached at residues asparagine 674, asparagine 698, and asparagine 714. N-linked (GlcNAc...) asparagine glycans are attached at residues asparagine 746 and asparagine 767. A C-cap/acidic domain region spans residues 760 to 812 (KQFDSFGNTSYQGNDGLRGFPLSKLCGGEDQVTTPAELDQEEEEEDSPMISWQ). The chain crosses the membrane as a helical span at residues 813-833 (GVLVGYGCGLVIGLSVIYIMW). The Cytoplasmic segment spans residues 834–863 (STQYPAWFSRMDLKLEHIITTKMKKHKKRY).

It belongs to the RLP family.

The protein localises to the cell membrane. In terms of biological role, involved in plant defense. Confers resistance to the fungal pathogen C.fulvum through recognition of the AVR9 elicitor protein. The sequence is that of Receptor-like protein 9DC1 from Solanum pimpinellifolium (Currant tomato).